A 361-amino-acid chain; its full sequence is 3-dehydroquinate synthase (361 aa).

NAD(+)-binding positions include 72-77, 130-131, Lys142, and Lys151; these read SGEKEK and TT. Zn(2+) is bound by residues Glu184, His247, and His264.

The protein belongs to the sugar phosphate cyclases superfamily. Dehydroquinate synthase family. NAD(+) is required as a cofactor. Co(2+) serves as cofactor. Requires Zn(2+) as cofactor.

The protein resides in the cytoplasm. The catalysed reaction is 7-phospho-2-dehydro-3-deoxy-D-arabino-heptonate = 3-dehydroquinate + phosphate. Its pathway is metabolic intermediate biosynthesis; chorismate biosynthesis; chorismate from D-erythrose 4-phosphate and phosphoenolpyruvate: step 2/7. Catalyzes the conversion of 3-deoxy-D-arabino-heptulosonate 7-phosphate (DAHP) to dehydroquinate (DHQ). The chain is 3-dehydroquinate synthase from Bacillus cereus (strain ATCC 14579 / DSM 31 / CCUG 7414 / JCM 2152 / NBRC 15305 / NCIMB 9373 / NCTC 2599 / NRRL B-3711).